Reading from the N-terminus, the 121-residue chain is Protein CHLORORESPIRATORY REDUCTION 42, chloroplastic (121 aa).

As to quaternary structure, biogenesis factor component of the plastidial NDH subcomplex A.

The protein localises to the plastid. It localises to the chloroplast. Its subcellular location is the chloroplast stroma. Required for both formation and activity of the chloroplast NAD(P)H dehydrogenase (NDH) complex of the photosynthetic electron transport chain. Functions in assembly or stabilization of the NDH complex; probably involved, together with CRR1 and CRR6, in the incorporation of NdhJ, NdhM, NdhK and NdhI into the NDH subcomplex A assembly intermediate (NAI500) to produce the complex NAI400. The chain is Protein CHLORORESPIRATORY REDUCTION 42, chloroplastic from Arabidopsis thaliana (Mouse-ear cress).